Reading from the N-terminus, the 126-residue chain is MRHKKRGRRLSRDTSHRQAMIKNMLVSLFKHERIETTVPRAKELRPVAEKVITLGKRGDLHARRQALSILNGDKEVVHKLFTDLAERNKDRQGGYTRILKTRFRYGDCAPMSFIELVERDATSAAE.

Belongs to the bacterial ribosomal protein bL17 family. Part of the 50S ribosomal subunit. Contacts protein L32.

The polypeptide is Large ribosomal subunit protein bL17 (Magnetococcus marinus (strain ATCC BAA-1437 / JCM 17883 / MC-1)).